A 513-amino-acid polypeptide reads, in one-letter code: Cytochrome P450 4p1 (513 aa).

Residues Glu-320 and Cys-459 each coordinate heme.

Belongs to the cytochrome P450 family. Requires heme as cofactor.

The protein resides in the endoplasmic reticulum membrane. Its subcellular location is the microsome membrane. Its function is as follows. May be involved in the metabolism of insect hormones and in the breakdown of synthetic insecticides. The chain is Cytochrome P450 4p1 (Cyp4p1) from Drosophila melanogaster (Fruit fly).